We begin with the raw amino-acid sequence, 268 residues long: Ribosomal RNA small subunit methyltransferase A (268 aa).

Residues N11, L13, G37, E58, D86, and N104 each contribute to the S-adenosyl-L-methionine site.

This sequence belongs to the class I-like SAM-binding methyltransferase superfamily. rRNA adenine N(6)-methyltransferase family. RsmA subfamily.

It is found in the cytoplasm. It catalyses the reaction adenosine(1518)/adenosine(1519) in 16S rRNA + 4 S-adenosyl-L-methionine = N(6)-dimethyladenosine(1518)/N(6)-dimethyladenosine(1519) in 16S rRNA + 4 S-adenosyl-L-homocysteine + 4 H(+). In terms of biological role, specifically dimethylates two adjacent adenosines (A1518 and A1519) in the loop of a conserved hairpin near the 3'-end of 16S rRNA in the 30S particle. May play a critical role in biogenesis of 30S subunits. This chain is Ribosomal RNA small subunit methyltransferase A, found in Campylobacter fetus subsp. fetus (strain 82-40).